The primary structure comprises 382 residues: Anhydro-N-acetylmuramic acid kinase (382 aa).

9 to 16 (GTSLDGID) contributes to the ATP binding site.

This sequence belongs to the anhydro-N-acetylmuramic acid kinase family.

It catalyses the reaction 1,6-anhydro-N-acetyl-beta-muramate + ATP + H2O = N-acetyl-D-muramate 6-phosphate + ADP + H(+). It functions in the pathway amino-sugar metabolism; 1,6-anhydro-N-acetylmuramate degradation. Its pathway is cell wall biogenesis; peptidoglycan recycling. Functionally, catalyzes the specific phosphorylation of 1,6-anhydro-N-acetylmuramic acid (anhMurNAc) with the simultaneous cleavage of the 1,6-anhydro ring, generating MurNAc-6-P. Is required for the utilization of anhMurNAc either imported from the medium or derived from its own cell wall murein, and thus plays a role in cell wall recycling. The protein is Anhydro-N-acetylmuramic acid kinase of Bacillus cereus (strain ZK / E33L).